Here is a 319-residue protein sequence, read N- to C-terminus: Acetyl-coenzyme A carboxylase carboxyl transferase subunit beta (319 aa).

Positions 24–293 (LWIKCPDTGQ…MIEQEPEPSA (270 aa)) constitute a CoA carboxyltransferase N-terminal domain. The disordered stretch occupies residues 282–319 (PEMIEQEPEPSAPVPPDEPDEPAATQEAPPAAPAAPPA).

It belongs to the AccD/PCCB family. Acetyl-CoA carboxylase is a heterohexamer composed of biotin carboxyl carrier protein (AccB), biotin carboxylase (AccC) and two subunits each of ACCase subunit alpha (AccA) and ACCase subunit beta (AccD).

It is found in the cytoplasm. It carries out the reaction N(6)-carboxybiotinyl-L-lysyl-[protein] + acetyl-CoA = N(6)-biotinyl-L-lysyl-[protein] + malonyl-CoA. It participates in lipid metabolism; malonyl-CoA biosynthesis; malonyl-CoA from acetyl-CoA: step 1/1. Functionally, component of the acetyl coenzyme A carboxylase (ACC) complex. Biotin carboxylase (BC) catalyzes the carboxylation of biotin on its carrier protein (BCCP) and then the CO(2) group is transferred by the transcarboxylase to acetyl-CoA to form malonyl-CoA. The sequence is that of Acetyl-coenzyme A carboxylase carboxyl transferase subunit beta from Nitrobacter winogradskyi (strain ATCC 25391 / DSM 10237 / CIP 104748 / NCIMB 11846 / Nb-255).